Consider the following 261-residue polypeptide: Cytochrome c oxidase subunit 3 (261 aa).

Residues 1–15 (MSHQAHAYHMVDPSP) lie on the Mitochondrial matrix side of the membrane. The chain crosses the membrane as a helical span at residues 16–34 (WPLTGAGAALLMTSGLAMW). Residues 35–40 (FHKNSC) lie on the Mitochondrial intermembrane side of the membrane. Residues 41–66 (ILMTLGLILMLLTMYQWWRDIVREGT) traverse the membrane as a helical segment. Topologically, residues 67–72 (FLGHHT) are mitochondrial matrix. The chain crosses the membrane as a helical span at residues 73-105 (SPVQQGLRYGMILFIISEVCFFAGFFWAFYHAS). At 106-128 (LAPTPELGLTWPPTGINPLNPFE) the chain is on the mitochondrial intermembrane side. A helical transmembrane segment spans residues 129–152 (VPLLNTAVLLASGVSVTWAHHSIT). At 153 to 155 (EKN) the chain is on the mitochondrial matrix side. Residues 156-183 (RTETTQALTLTVLLGLYFTALQIMEYYE) traverse the membrane as a helical segment. The Mitochondrial intermembrane portion of the chain corresponds to 184–190 (TPFTMAD). A helical transmembrane segment spans residues 191–223 (GVYGSTFFVATGFHGLHVIIGSLFLLTCLLRHL). At 224-232 (QYHFTSKHH) the chain is on the mitochondrial matrix side. A helical membrane pass occupies residues 233–256 (FGFEAAAWYWHFVDVVWLFLYISI). Residues 257–261 (YWWGS) lie on the Mitochondrial intermembrane side of the membrane.

It belongs to the cytochrome c oxidase subunit 3 family. In terms of assembly, component of the cytochrome c oxidase (complex IV, CIV), a multisubunit enzyme composed of 14 subunits. The complex is composed of a catalytic core of 3 subunits MT-CO1, MT-CO2 and MT-CO3, encoded in the mitochondrial DNA, and 11 supernumerary subunits COX4I, COX5A, COX5B, COX6A, COX6B, COX6C, COX7A, COX7B, COX7C, COX8 and NDUFA4, which are encoded in the nuclear genome. The complex exists as a monomer or a dimer and forms supercomplexes (SCs) in the inner mitochondrial membrane with NADH-ubiquinone oxidoreductase (complex I, CI) and ubiquinol-cytochrome c oxidoreductase (cytochrome b-c1 complex, complex III, CIII), resulting in different assemblies (supercomplex SCI(1)III(2)IV(1) and megacomplex MCI(2)III(2)IV(2)).

The protein resides in the mitochondrion inner membrane. It carries out the reaction 4 Fe(II)-[cytochrome c] + O2 + 8 H(+)(in) = 4 Fe(III)-[cytochrome c] + 2 H2O + 4 H(+)(out). Its function is as follows. Component of the cytochrome c oxidase, the last enzyme in the mitochondrial electron transport chain which drives oxidative phosphorylation. The respiratory chain contains 3 multisubunit complexes succinate dehydrogenase (complex II, CII), ubiquinol-cytochrome c oxidoreductase (cytochrome b-c1 complex, complex III, CIII) and cytochrome c oxidase (complex IV, CIV), that cooperate to transfer electrons derived from NADH and succinate to molecular oxygen, creating an electrochemical gradient over the inner membrane that drives transmembrane transport and the ATP synthase. Cytochrome c oxidase is the component of the respiratory chain that catalyzes the reduction of oxygen to water. Electrons originating from reduced cytochrome c in the intermembrane space (IMS) are transferred via the dinuclear copper A center (CU(A)) of subunit 2 and heme A of subunit 1 to the active site in subunit 1, a binuclear center (BNC) formed by heme A3 and copper B (CU(B)). The BNC reduces molecular oxygen to 2 water molecules using 4 electrons from cytochrome c in the IMS and 4 protons from the mitochondrial matrix. The chain is Cytochrome c oxidase subunit 3 (MT-CO3) from Petromyzon marinus (Sea lamprey).